A 641-amino-acid chain; its full sequence is Hemagglutinin-esterase-fusion glycoprotein (641 aa).

Positions 1 to 26 (EKIKICLQKQVNSSFSLHNGFGGNLY) are fusion domain-1. At 1–616 (EKIKICLQKQ…QSDPFYWGSS (616 aa)) the chain is on the extracellular side. Cystine bridges form between Cys6/Cys569, Cys106/Cys151, Cys126/Cys174, Cys196/Cys238, Cys215/Cys302, Cys223/Cys275, and Cys332/Cys338. N-linked (GlcNAc...) asparagine; by host glycans are attached at residues Asn12 and Asn47. Residues 27–137 (ATEEKRMFEL…RKNWTDIKLN (111 aa)) form an esterase domain-1 region. Ser57 acts as the Nucleophile in catalysis. An N-linked (GlcNAc...) asparagine; by host glycan is attached at Asn130. The segment at 137 to 296 (NFQKNIYELA…VRSSPRFLLM (160 aa)) is N-acetyl-9-O-acetylneuraminic acid binding. Residues 297 to 351 (PERSYCFDMKEKGPVTAVQSIWGKDRKSDYAVDQACLSTPGCMLIQKQKPYTGEA) form an esterase domain-2 region. Catalysis depends on charge relay system residues Asp352 and His355. Positions 352–637 (DDHHGDQEMR…AALVISGIAI (286 aa)) are fusion domain-2. Asn381 carries an N-linked (GlcNAc...) asparagine; by host glycan. A helical membrane pass occupies residues 617 to 637 (LGLAITAAISLAALVISGIAI). The Cytoplasmic segment spans residues 638–641 (CRTK).

Belongs to the influenza type C/coronaviruses hemagglutinin-esterase family. In terms of assembly, homotrimer of disulfide-linked HEF1-HEF2. In natural infection, inactive HEF is matured into HEF1 and HEF2 outside the cell by one or more trypsin-like, arginine-specific endoprotease.

It is found in the virion membrane. It localises to the host cell membrane. It catalyses the reaction N-acetyl-9-O-acetylneuraminate + H2O = N-acetylneuraminate + acetate + H(+). The enzyme catalyses N-acetyl-4-O-acetylneuraminate + H2O = N-acetylneuraminate + acetate + H(+). Binds to the N-acetyl-9-O-acetylneuraminic acid residues on the cell surface, bringing about the attachment of the virus particle to the cell. Plays a major role in the determination of host range restriction and virulence. Class I viral fusion protein. Responsible for penetration of the virus into the cell cytoplasm by mediating the fusion of the membrane of the endocytosed virus particle with the endosomal membrane. Low pH in endosomes induce an irreversible conformational change in HEF2, releasing the fusion hydrophobic peptide. Several trimers are required to form a competent fusion pore. Displays a receptor-destroying activity which is a neuraminidate-O-acetyl esterase. This activity cleaves off any receptor on the cell surface, which would otherwise prevent virions release. These cleavages prevent self-aggregation and ensure the efficient spread of the progeny virus from cell to cell. This chain is Hemagglutinin-esterase-fusion glycoprotein (HE), found in Influenza C virus (strain C/Kyoto/41/1982).